Here is a 499-residue protein sequence, read N- to C-terminus: Glutamyl-tRNA(Gln) amidotransferase subunit B, chloroplastic/mitochondrial (499 aa).

Belongs to the GatB/GatE family. GatB subfamily. As to quaternary structure, subunit of the heterotrimeric GatCAB amidotransferase (AdT) complex, composed of A, B and C subunits.

It localises to the mitochondrion. The protein localises to the plastid. It is found in the chloroplast. It carries out the reaction L-glutamyl-tRNA(Gln) + L-glutamine + ATP + H2O = L-glutaminyl-tRNA(Gln) + L-glutamate + ADP + phosphate + H(+). Functionally, allows the formation of correctly charged Gln-tRNA(Gln) through the transamidation of misacylated Glu-tRNA(Gln) in chloroplasts and mitochondria. The reaction takes place in the presence of glutamine and ATP through an activated gamma-phospho-Glu-tRNA(Gln). The chain is Glutamyl-tRNA(Gln) amidotransferase subunit B, chloroplastic/mitochondrial from Ostreococcus lucimarinus (strain CCE9901).